We begin with the raw amino-acid sequence, 396 residues long: Cathepsin D (396 aa).

The first 18 residues, 1–18, serve as a signal peptide directing secretion; sequence MKMLLLCVFSALALTNDA. A propeptide spans 19-61 (activation peptide); that stretch reads LVRIPLKKFRSIRRQLTDSGKRAEELLADHHSLKYNLSFPASN. In terms of domain architecture, Peptidase A1 spans 76 to 393; sequence YYGEIGLGTP…DRDANRVGFA (318 aa). D94 is an active-site residue. C107 and C114 form a disulfide bridge. N-linked (GlcNAc...) asparagine glycans are attached at residues N131 and N249. A disulfide bridge links C272 with C276. Residue D281 is part of the active site. C315 and C352 form a disulfide bridge.

It belongs to the peptidase A1 family. As to quaternary structure, monomer.

It localises to the lysosome. It carries out the reaction Specificity similar to, but narrower than, that of pepsin A. Does not cleave the 4-Gln-|-His-5 bond in B chain of insulin.. With respect to regulation, inhibited by pepstatin. Its function is as follows. Acid protease active in intracellular protein breakdown. In Chionodraco hamatus (Antarctic teleost icefish), this protein is Cathepsin D (ctsd).